A 198-amino-acid polypeptide reads, in one-letter code: Paired-like homeodomain transcription factor LEUTX (198 aa).

The segment at residues 33-67 (PSLATMGKLASKLQLDLSVVKIWFKNQRAKWKRQQ) is a DNA-binding region (homeobox). Positions 65 to 133 (RQQRQQMQTR…PGGASASARV (69 aa)) are disordered. Residues 79 to 190 (PANQTTSVKK…NQYLFPVCLE (112 aa)) are LEUTX region. Basic and acidic residues predominate over residues 110–119 (ANDHDLREPS). 4 short sequence motifs (9aaTAD) span residues 125 to 136 (GGASASARVSSW), 153 to 161 (PPWASTLFE), 163 to 171 (DEFVKIYDL), and 178 to 186 (SSLNQYLFP).

This sequence belongs to the paired homeobox family.

It localises to the nucleus. Its function is as follows. Paired-like homeobox transcription factor involved in embryogenesis. May act as a regulator of embryo genome activation. Binds to a 36 bp DNA elements containing a 5'-TAATCC-3' sequence motif, referred to as EEA motif (EGA-enriched Alu-motif), present in the promoters of target genes activated in early embryos. Inactive transcriptional activity. The polypeptide is Paired-like homeodomain transcription factor LEUTX (Homo sapiens (Human)).